Reading from the N-terminus, the 145-residue chain is Ribosomal RNA large subunit methyltransferase H (145 aa).

S-adenosyl-L-methionine is bound by residues L64, G93, and 112-117 (LSPLTF).

It belongs to the RNA methyltransferase RlmH family. Homodimer.

The protein resides in the cytoplasm. It catalyses the reaction pseudouridine(1915) in 23S rRNA + S-adenosyl-L-methionine = N(3)-methylpseudouridine(1915) in 23S rRNA + S-adenosyl-L-homocysteine + H(+). Specifically methylates the pseudouridine at position 1915 (m3Psi1915) in 23S rRNA. This chain is Ribosomal RNA large subunit methyltransferase H, found in Prochlorococcus marinus (strain NATL2A).